The chain runs to 364 residues: MGILEKISEIEKEIARTQKNKATEYHLGLLKAKLAKYRAQLLEPSKSSSSKGEGFDVMKSGDARVALIGFPSVGKSTFLSLMTSTASEAASYEFTTLTCIPGVIEYKGANIQLLDLPGIIEGAAQGKGRGRQVIAVARTADVVIMMLDATKGEVQRSLLEKELESVGIRLNKHKPNIYFKPKKGGGISFNSTVTLTQCSEKLVQLILHEYKIFNAEVLFREDCSPDEFIDVIVGNRVYMPCLYVYNKIDQISMEEVDRLARKPDSVVISCGMKLNLDYLLEMLWEYLALTCIYTKKRGQRPDFTDAIILRKGASVEHVCHRIHRSLASQFKYALVWGTSTKYSPQRVGLTHTMEHEDVIQIVKK.

(3S)-3-hydroxylysine is present on Lys21. The OBG-type G domain occupies 63 to 288 (ARVALIGFPS…LLEMLWEYLA (226 aa)). GTP-binding positions include 69–76 (GFPSVGKS), 94–98 (FTTLT), 115–118 (DLPG), 246–249 (NKID), and 269–271 (SCG). Mg(2+) contacts are provided by Ser76 and Thr96. One can recognise a TGS domain in the interval 288–363 (ALTCIYTKKR…EHEDVIQIVK (76 aa)).

The protein belongs to the TRAFAC class OBG-HflX-like GTPase superfamily. OBG GTPase family. In terms of assembly, interacts with RWDD1; this interaction confers protection to polyubiquitination and proteolytic degradation. Interacts with JMJD7; this interaction is direct. It depends on Mg(2+) as a cofactor. Post-translationally, polyubiquitinated. Hydroxylated (with S stereochemistry) at C-3 of Lys-21 by JMJD7.

The protein localises to the nucleus. Its subcellular location is the cytoplasm. It catalyses the reaction GTP + H2O = GDP + phosphate + H(+). Functionally, catalyzes the conversion of GTP to GDP through hydrolysis of the gamma-phosphate bond in GTP. When hydroxylated at C-3 of 'Lys-21' by JMJD7, may bind to RNA and play a role in translation. This chain is Developmentally-regulated GTP-binding protein 2 (DRG2), found in Bos taurus (Bovine).